The chain runs to 289 residues: 4-diphosphocytidyl-2-C-methyl-D-erythritol kinase (289 aa).

Residue Lys-10 is part of the active site. Residue 94–104 (PVAAGLAGGSS) coordinates ATP. Asp-136 is a catalytic residue.

Belongs to the GHMP kinase family. IspE subfamily.

It catalyses the reaction 4-CDP-2-C-methyl-D-erythritol + ATP = 4-CDP-2-C-methyl-D-erythritol 2-phosphate + ADP + H(+). Its pathway is isoprenoid biosynthesis; isopentenyl diphosphate biosynthesis via DXP pathway; isopentenyl diphosphate from 1-deoxy-D-xylulose 5-phosphate: step 3/6. In terms of biological role, catalyzes the phosphorylation of the position 2 hydroxy group of 4-diphosphocytidyl-2C-methyl-D-erythritol. This chain is 4-diphosphocytidyl-2-C-methyl-D-erythritol kinase, found in Bacillus pumilus (strain SAFR-032).